A 65-amino-acid chain; its full sequence is Light-harvesting protein B-800-850 alpha chain C (65 aa).

The Cytoplasmic portion of the chain corresponds to 1–11 (MNQGRIWTVVS). Residues 12 to 35 (PTVGLPLLLGSVAAIAFAVHFAVL) traverse the membrane as a helical segment. An a bacteriochlorophyll-binding site is contributed by His-31. The Periplasmic segment spans residues 36–65 (ENTSWVAAFMNGKSVAAAPAPAAPAAPAKK).

This sequence belongs to the antenna complex alpha subunit family. In terms of assembly, the core complex is formed by different alpha and beta chains, binding bacteriochlorophyll molecules, and arranged most probably in tetrameric structures disposed around the reaction center. The non-pigmented gamma chains may constitute additional components.

The protein localises to the cell inner membrane. Antenna complexes are light-harvesting systems, which transfer the excitation energy to the reaction centers. The polypeptide is Light-harvesting protein B-800-850 alpha chain C (pucAC) (Rhodopseudomonas palustris).